Here is a 204-residue protein sequence, read N- to C-terminus: Methylthioribulose-1-phosphate dehydratase (204 aa).

Zn(2+)-binding residues include H94 and H96.

Belongs to the aldolase class II family. MtnB subfamily. The cofactor is Zn(2+).

It catalyses the reaction 5-(methylsulfanyl)-D-ribulose 1-phosphate = 5-methylsulfanyl-2,3-dioxopentyl phosphate + H2O. It participates in amino-acid biosynthesis; L-methionine biosynthesis via salvage pathway; L-methionine from S-methyl-5-thio-alpha-D-ribose 1-phosphate: step 2/6. Catalyzes the dehydration of methylthioribulose-1-phosphate (MTRu-1-P) into 2,3-diketo-5-methylthiopentyl-1-phosphate (DK-MTP-1-P). This Cronobacter sakazakii (strain ATCC BAA-894) (Enterobacter sakazakii) protein is Methylthioribulose-1-phosphate dehydratase.